A 55-amino-acid chain; its full sequence is Locustin (55 aa).

4 cysteine pairs are disulfide-bonded: C5–C40, C7–C36, C10–C32, and C17–C54.

In terms of assembly, monomer. Stored in hemocyte granules and secreted into the hemolymph.

It localises to the secreted. Its function is as follows. Has antibacterial activity against Gram-positive bacterium M.luteus. The polypeptide is Locustin (Locusta migratoria (Migratory locust)).